The sequence spans 103 residues: Small ribosomal subunit protein uS10 (103 aa).

The protein belongs to the universal ribosomal protein uS10 family. As to quaternary structure, part of the 30S ribosomal subunit.

In terms of biological role, involved in the binding of tRNA to the ribosomes. This is Small ribosomal subunit protein uS10 from Azoarcus sp. (strain BH72).